A 334-amino-acid polypeptide reads, in one-letter code: MHSKVVIIGSGPAAHTAAIYLARAELKPVLYEGFMANGIAAGGQLTTTTEIENFPGFPDGIMGQELMDKMKAQSERFGTQIISETVAKVDLSARPFKYATEWSPEEYHTADSIILATGASARRLHLPGEEKYWQNGISACAVCDGAVPIFRNKHLVVIGGGDSAAEEAMYLTKYGSHVTVLVRKDKLRASSIMAHRLLNHEKVTVRFNTVGVEVKGDDKGLMSHLVVKDVTTGKEETLEANGLFYAIGHDPATALVKGQLETDADGYVVTKPGTTLTSVEGVFAAGDVQDKRYRQAITSAGTGCMAALDAEKFLSEHEETPAEHRDTSAVQGNL.

FAD is bound by residues 10–13 (SGPA), 39–40 (IA), Gln44, Asn53, Val86, Cys143, Asp287, and 294–296 (RQA). An intrachain disulfide couples Cys140 to Cys143.

Belongs to the class-II pyridine nucleotide-disulfide oxidoreductase family. Homodimer. Requires FAD as cofactor.

The protein resides in the cytoplasm. It carries out the reaction [thioredoxin]-dithiol + NADP(+) = [thioredoxin]-disulfide + NADPH + H(+). This chain is Thioredoxin reductase (cys-9), found in Neurospora crassa (strain ATCC 24698 / 74-OR23-1A / CBS 708.71 / DSM 1257 / FGSC 987).